Reading from the N-terminus, the 86-residue chain is Anti-adapter protein IraP (86 aa).

A coiled-coil region spans residues 1 to 36 (MKNLIAELLLKLAQKEEESKELCAQVEALEIIVTAM).

Belongs to the IraP family. Interacts with RssB.

It is found in the cytoplasm. Functionally, inhibits RpoS proteolysis by regulating RssB activity, thereby increasing the stability of the sigma stress factor RpoS especially during phosphate starvation, but also in stationary phase and during nitrogen starvation. Its effect on RpoS stability is due to its interaction with RssB, which probably blocks the interaction of RssB with RpoS, and the consequent delivery of the RssB-RpoS complex to the ClpXP protein degradation pathway. This chain is Anti-adapter protein IraP, found in Shigella boydii serotype 4 (strain Sb227).